The sequence spans 173 residues: Large ribosomal subunit protein bL9 (173 aa).

This sequence belongs to the bacterial ribosomal protein bL9 family.

Binds to the 23S rRNA. The polypeptide is Large ribosomal subunit protein bL9 (Rickettsia bellii (strain RML369-C)).